The primary structure comprises 292 residues: Ribosomal protein L11 methyltransferase (292 aa).

S-adenosyl-L-methionine contacts are provided by T145, G166, D188, and N229.

It belongs to the methyltransferase superfamily. PrmA family.

The protein resides in the cytoplasm. The catalysed reaction is L-lysyl-[protein] + 3 S-adenosyl-L-methionine = N(6),N(6),N(6)-trimethyl-L-lysyl-[protein] + 3 S-adenosyl-L-homocysteine + 3 H(+). Its function is as follows. Methylates ribosomal protein L11. This chain is Ribosomal protein L11 methyltransferase, found in Nitrosococcus oceani (strain ATCC 19707 / BCRC 17464 / JCM 30415 / NCIMB 11848 / C-107).